Consider the following 357-residue polypeptide: UDP-N-acetylglucosamine--N-acetylmuramyl-(pentapeptide) pyrophosphoryl-undecaprenol N-acetylglucosamine transferase (357 aa).

Residues 12 to 14 (TGG), N124, R162, S190, I243, 262 to 267 (ALTVAE), and Q288 each bind UDP-N-acetyl-alpha-D-glucosamine.

It belongs to the glycosyltransferase 28 family. MurG subfamily.

It localises to the cell inner membrane. The catalysed reaction is di-trans,octa-cis-undecaprenyl diphospho-N-acetyl-alpha-D-muramoyl-L-alanyl-D-glutamyl-meso-2,6-diaminopimeloyl-D-alanyl-D-alanine + UDP-N-acetyl-alpha-D-glucosamine = di-trans,octa-cis-undecaprenyl diphospho-[N-acetyl-alpha-D-glucosaminyl-(1-&gt;4)]-N-acetyl-alpha-D-muramoyl-L-alanyl-D-glutamyl-meso-2,6-diaminopimeloyl-D-alanyl-D-alanine + UDP + H(+). Its pathway is cell wall biogenesis; peptidoglycan biosynthesis. Functionally, cell wall formation. Catalyzes the transfer of a GlcNAc subunit on undecaprenyl-pyrophosphoryl-MurNAc-pentapeptide (lipid intermediate I) to form undecaprenyl-pyrophosphoryl-MurNAc-(pentapeptide)GlcNAc (lipid intermediate II). The chain is UDP-N-acetylglucosamine--N-acetylmuramyl-(pentapeptide) pyrophosphoryl-undecaprenol N-acetylglucosamine transferase from Alcanivorax borkumensis (strain ATCC 700651 / DSM 11573 / NCIMB 13689 / SK2).